Here is a 315-residue protein sequence, read N- to C-terminus: ATP synthase gamma chain (315 aa).

This sequence belongs to the ATPase gamma chain family. F-type ATPases have 2 components, CF(1) - the catalytic core - and CF(0) - the membrane proton channel. CF(1) has five subunits: alpha(3), beta(3), gamma(1), delta(1), epsilon(1). CF(0) has three main subunits: a, b and c.

The protein resides in the cellular thylakoid membrane. In terms of biological role, produces ATP from ADP in the presence of a proton gradient across the membrane. The gamma chain is believed to be important in regulating ATPase activity and the flow of protons through the CF(0) complex. This chain is ATP synthase gamma chain, found in Nostoc sp. (strain PCC 7120 / SAG 25.82 / UTEX 2576).